A 398-amino-acid chain; its full sequence is Cobalamin import ATP-binding protein BtuD (398 aa).

An ABC transporter domain is found at 3-237 (LDVTGLDVEL…DTIRAAFDAR (235 aa)). 35-42 (GPNGAGKS) contacts ATP.

Belongs to the ABC transporter superfamily. As to quaternary structure, the complex is composed of two ATP-binding proteins (BtuD), two transmembrane proteins (BtuC) and a solute-binding protein (BtuF).

It localises to the cell membrane. It carries out the reaction an R-cob(III)alamin(out) + ATP + H2O = an R-cob(III)alamin(in) + ADP + phosphate + H(+). Required for corrinoid utilization. Probably part of the ABC transporter complex BtuCDF involved in cobalamin (vitamin B12) import. Probably responsible for energy coupling to the transport system. The polypeptide is Cobalamin import ATP-binding protein BtuD (btuD) (Halobacterium salinarum (strain ATCC 29341 / DSM 671 / R1)).